The sequence spans 296 residues: Malonyl-[acyl-carrier protein] O-methyltransferase (296 aa).

It belongs to the methyltransferase superfamily.

The catalysed reaction is malonyl-[ACP] + S-adenosyl-L-methionine = malonyl-[ACP] methyl ester + S-adenosyl-L-homocysteine. The protein operates within cofactor biosynthesis; biotin biosynthesis. Its function is as follows. Converts the free carboxyl group of a malonyl-thioester to its methyl ester by transfer of a methyl group from S-adenosyl-L-methionine (SAM). It allows to synthesize pimeloyl-ACP via the fatty acid synthetic pathway. In Methylovorus sp. (strain MP688), this protein is Malonyl-[acyl-carrier protein] O-methyltransferase.